Consider the following 467-residue polypeptide: MVLLNSEEVSCNDHHQVDVVAAAGLQCSGDMLGDKQLVSQVILEGLEIEEPPADEMEAAEKKAGISRLMAGYVQHLQHRSAYHLGYPLNFDYDFSPLAPFLNFSLNNAGDPFAKVNNSVHSRQFEVAVLNWFANFWDVQRDQFWGYITSGGTEGNLYGLLVGRELFPDGILYASNDSHYSVFKAAKMYRVKCIRIATTVSGEMNYADLKSKLQHNTNSPAIINANIGTTFKGAVDDIDQIISTLEKCGFQNRYYIHCDSALSGMMTPFMKQAPKVSFKKPIGSISVSGHKFLGCPMPCGVVITRLEHAEVLSTDIEYIASRDSTITGSRNGHAPIFLWYTLSKKGYKGLLKEVHICMGNARYLEVLLKQVGISASCNTLSNIVVFERPKDERIVCRWQLACEGNLAHIVVMPNVTFEKLTVFVEELAEKRKDWYQDKGFDIPCLAVDIGKENCYCNLHAKKLRIPKM.

Substrate is bound at residue His-178. Lys-290 is subject to N6-(pyridoxal phosphate)lysine.

Belongs to the group II decarboxylase family. It depends on pyridoxal 5'-phosphate as a cofactor.

It catalyses the reaction L-serine + H(+) = ethanolamine + CO2. In terms of biological role, catalyzes the biosynthesis of ethanolamine from serine. Decarboxylation of free serine is the major source of ethanolamine production in plants and ethanolamine metabolism is crucial for the synthesis of choline, phosphatidylethanolamine (PE) and phosphatidylcholine (PC), and thus for plant growth. The chain is Serine decarboxylase 2 from Oryza sativa subsp. japonica (Rice).